The primary structure comprises 1564 residues: ATP-dependent permease PDR10 (1564 aa).

Polar residues predominate over residues 1 to 16; that stretch reads MLQAPSSSNSGLNQGN. Residues 1 to 37 form a disordered region; it reads MLQAPSSSNSGLNQGNAAPDGPPNETQPYEGLDAAAQ. At 1 to 587 the chain is on the cytoplasmic side; it reads MLQAPSSSNS…AAIFFAILFN (587 aa). Residues 174–430 enclose the ABC transporter 1 domain; the sequence is ISRRLFHRTH…FQRMGYVCPE (257 aa). 5 consecutive transmembrane segments (helical) span residues 588–608, 624–644, 674–694, 699–719, and 732–752; these read AFSS…TEKH, TFSD…PYYF, RCIG…SVLL, MYTG…WISY, and INEF…GPNY. Asn-754 is a glycosylation site (N-linked (GlcNAc...) asparagine). Residues 839 to 849 are compositionally biased toward basic residues; the sequence is KGIVSEKKKKN. Positions 839-872 are disordered; the sequence is KGIVSEKKKKNQPTLSTSDAEKDVEMNNNSSATD. The helical transmembrane segment at 841-861 threads the bilayer; the sequence is IVSEKKKKNQPTLSTSDAEKD. Over 862 to 1304 the chain is Cytoplasmic; it reads VEMNNNSSAT…IFMFTVVFNP (443 aa). Residues 923-1166 form the ABC transporter 2 domain; it reads FHWKNLCYDI…MINYFEAHGA (244 aa). Position 959–966 (959–966) interacts with ATP; it reads GASGAGKT. The next 6 helical transmembrane spans lie at 1305–1325, 1340–1360, 1390–1410, 1426–1446, 1459–1479, and 1491–1511; these read ILQQ…ARER, ILVE…VYYY, VYIS…ENAA, VLAT…VSPL, ANAS…PSGM, and STGT…FCQF. The Cytoplasmic segment spans residues 1512-1564; that stretch reads SSTNDYLATVSSSYSRRWMNYGIFSAYIVFDYCAAIFLYWLVRVPKKSKKLKK.

Belongs to the ABC transporter superfamily. ABCG family. PDR (TC 3.A.1.205) subfamily.

It is found in the membrane. This is ATP-dependent permease PDR10 (PDR10) from Saccharomyces cerevisiae (strain ATCC 204508 / S288c) (Baker's yeast).